Reading from the N-terminus, the 370-residue chain is Gibberellin 3-beta-dioxygenase 2-1 (370 aa).

The region spanning 205–306 is the Fe2OG dioxygenase domain; the sequence is MTATMHLNWY…RISLGYFLGP (102 aa). Fe cation is bound by residues H229, D231, and H287. R297 is a catalytic residue.

Belongs to the iron/ascorbate-dependent oxidoreductase family. GA3OX subfamily. L-ascorbate serves as cofactor. Fe cation is required as a cofactor. As to expression, expressed in internodes, nodes and the ear of the elongating stem.

The catalysed reaction is gibberellin A20 + 2-oxoglutarate + O2 = gibberellin A1 + succinate + CO2. Functionally, converts the inactive gibberellin precursors GA9 and GA20 in the bioactives gibberellins GA4 and GA1. Also accepts GA15, GA44, the 2,3-unsaturated GA5 and 2,3-dihydroGA9 as substrate. No activity with GA12, GA53, GA24, GA19 and GA25. Also possesses 2-beta-hydroxylase, 2,3-desaturase, 2,3-epoxidase and 13-hydroxylase activities. The sequence is that of Gibberellin 3-beta-dioxygenase 2-1 (GA3ox2-1) from Triticum aestivum (Wheat).